The sequence spans 467 residues: ATP-dependent rRNA helicase rrp3 (467 aa).

The segment at 1-48 is disordered; it reads MPGVKKRKVAREAPAPAPAQESDVESSTPEQTQEPEAQEQEQEEGQSK. Positions 48 to 76 match the Q motif motif; that stretch reads KTFKELGIIEQLCEACETMGYKAPTPIQR. In terms of domain architecture, Helicase ATP-binding spans 79-250; that stretch reads IPLALKGRDL…RASLSNPLRV (172 aa). Residue 92-99 participates in ATP binding; sequence AETGSGKT. The DEAD box motif lies at 198–201; the sequence is DEAD. A Helicase C-terminal domain is found at 262–422; sequence TLLQSYLFIP…EYDCPKDEVM (161 aa). A disordered region spans residues 439 to 467; sequence MKDYNEKKGSRGKKFGGKRSRDEMDQEEG.

This sequence belongs to the DEAD box helicase family. DDX47/RRP3 subfamily. In terms of assembly, interacts with the SSU processome.

It is found in the nucleus. It catalyses the reaction ATP + H2O = ADP + phosphate + H(+). ATP-dependent rRNA helicase required for pre-ribosomal RNA processing. Involved in the maturation of the 35S-pre-rRNA and to its cleavage to mature 18S rRNA. The sequence is that of ATP-dependent rRNA helicase rrp3 from Aspergillus niger (strain ATCC MYA-4892 / CBS 513.88 / FGSC A1513).